The chain runs to 959 residues: Bifunctional premutilin synthase (959 aa).

The interval 1 to 542 is class II diterpene cyclase; the sequence is MGLSEDLHAR…ALNVPIPRFD (542 aa). Residues 309–312 carry the DXDD motif motif; sequence DADM. The active-site For class II diterpene cyclase activity is Asp-311. Residues 543–959 are class I diterpene synthase; it reads PSSISTLPAI…TANGSNGIHH (417 aa). Residue Asp-649 is the For class I diterpene synthase activity of the active site. Asp-649, Asp-653, and Asn-824 together coordinate Mg(2+). Residues 649–653 carry the DDXXD motif motif; it reads DDYLD. The segment at 931 to 959 is disordered; that stretch reads KGTNGVKKINGSSTNGTKVTANGSNGIHH. A compositionally biased stretch (polar residues) spans 940–959; the sequence is NGSSTNGTKVTANGSNGIHH.

This sequence belongs to the terpene synthase family. Mg(2+) is required as a cofactor.

Its pathway is secondary metabolite biosynthesis; terpenoid biosynthesis. In terms of biological role, bifunctional premutilin synthase; part of the gene cluster that mediates the biosynthesis of pleuromutilin, a tricyclic diterpene showing antibacterial properties. The geranylgeranyl diphosphate (GGPP) synthase catalyzes the first step in pleuromutilin biosynthesis. GGPP is then substrate of the premutilin synthase (PS) to yield premutilin. Premutilin synthase is a bifunctional enzyme composed of the fusion of a class II diterpene cyclase (DTC) and a class I diterpene synthase (DTS), with the corresponding domains and active sites containing characteristic aspartate-rich motifs. GGPP is first converted to mutildienyl-diphosphate (MPP) at the class II DTC site. MPP is subsequently further cyclized at the class I DTS site, followed by a 1,5-hydride shift and addition of water prior to terminating deprotonation, to yield premutilin. In addition to the aforementioned GGPP synthase and bifunctional diterpene synthase, the cluster also contains three cytochrome P450 monooxygenases, a short-chain alcohol dehydrogenase, and an acyltransferase, involved in the conversion of premutilin to pleuromutilin. The cytochrome P450 monooxygenases P450-1 and P450-2 hydroxylate premutilin at C-11 and C-3, respectively, producing 11-hydroxypremutilin and 3-hydroxypremutilin. The combination of the actions of both ple5 and ple6 leads to the production of 3,11-dihydroxypremutilin. The short chain dehydrogenase SDR further converts 3,11-dihydroxypremutilin into mutilin. The acetyltransferase ATF then acetylates mutilin to produce 14-O-acetylmutilin. Finally, the cytochrome P450 monooxygenase P450-3 catalyzes hydroxylation on the alpha position of the acetyl side chain of 14-O-acetylmutilin to yield pleuromutilin. This is Bifunctional premutilin synthase from Clitopilus passeckerianus (Pleurotus passeckerianus).